Consider the following 268-residue polypeptide: Phosphate import ATP-binding protein PstB 2 (268 aa).

The 242-residue stretch at 22-263 folds into the ABC transporter domain; sequence MALTGVNFYY…PKVKRTEDYI (242 aa). Residue 54-61 coordinates ATP; the sequence is GPSGCGKS.

The protein belongs to the ABC transporter superfamily. Phosphate importer (TC 3.A.1.7) family. As to quaternary structure, the complex is composed of two ATP-binding proteins (PstB), two transmembrane proteins (PstC and PstA) and a solute-binding protein (PstS).

It localises to the cell inner membrane. It carries out the reaction phosphate(out) + ATP + H2O = ADP + 2 phosphate(in) + H(+). Its function is as follows. Part of the ABC transporter complex PstSACB involved in phosphate import. Responsible for energy coupling to the transport system. The polypeptide is Phosphate import ATP-binding protein PstB 2 (Rhizobium johnstonii (strain DSM 114642 / LMG 32736 / 3841) (Rhizobium leguminosarum bv. viciae)).